Reading from the N-terminus, the 550-residue chain is Beta-fructofuranosidase, insoluble isoenzyme CWINV6 (550 aa).

Residues 28–31 (WLND), glutamine 47, 92–93 (WS), 157–158 (RD), and glutamate 214 each bind substrate. The active site involves aspartate 31. Residues asparagine 235 and asparagine 272 are each glycosylated (N-linked (GlcNAc...) asparagine).

This sequence belongs to the glycosyl hydrolase 32 family. In terms of tissue distribution, expressed in seedlings and leaves, and, to a lower extent, in flowers and seeds.

The protein resides in the secreted. It localises to the extracellular space. The protein localises to the apoplast. It is found in the cell wall. The catalysed reaction is Hydrolysis of terminal, non-reducing (2-&gt;1)- and (2-&gt;6)-linked beta-D-fructofuranose residues in fructans.. 6 and 1-fructan exohydrolase that can degrade both inulin and levan-type fructans, such as phlein, levan, neokestose, levanbiose, 6-kestose, 1-kestose, inulin, and 1,1-nystose. This chain is Beta-fructofuranosidase, insoluble isoenzyme CWINV6 (CWINV6), found in Arabidopsis thaliana (Mouse-ear cress).